A 468-amino-acid chain; its full sequence is Adenosylhomocysteinase (468 aa).

Thr-57, Asp-132, and Glu-194 together coordinate substrate. Residue 195 to 197 (TTT) coordinates NAD(+). Substrate is bound by residues Lys-224 and Asp-228. Residues Asn-229, 258–263 (GFGDVG), Glu-281, Asn-316, 337–339 (IGH), and Asn-382 contribute to the NAD(+) site.

Belongs to the adenosylhomocysteinase family. NAD(+) serves as cofactor.

It localises to the cytoplasm. The catalysed reaction is S-adenosyl-L-homocysteine + H2O = L-homocysteine + adenosine. Its pathway is amino-acid biosynthesis; L-homocysteine biosynthesis; L-homocysteine from S-adenosyl-L-homocysteine: step 1/1. May play a key role in the regulation of the intracellular concentration of adenosylhomocysteine. This is Adenosylhomocysteinase from Methylobacterium nodulans (strain LMG 21967 / CNCM I-2342 / ORS 2060).